The sequence spans 452 residues: Phosphoglucosamine mutase (452 aa).

The active-site Phosphoserine intermediate is serine 104. Mg(2+) contacts are provided by serine 104, aspartate 241, aspartate 243, and aspartate 245. The residue at position 104 (serine 104) is a Phosphoserine.

The protein belongs to the phosphohexose mutase family. Mg(2+) is required as a cofactor. Post-translationally, activated by phosphorylation.

The catalysed reaction is alpha-D-glucosamine 1-phosphate = D-glucosamine 6-phosphate. Its function is as follows. Catalyzes the conversion of glucosamine-6-phosphate to glucosamine-1-phosphate. The polypeptide is Phosphoglucosamine mutase (Arthrobacter sp. (strain FB24)).